Consider the following 213-residue polypeptide: Kynurenine formamidase (213 aa).

Substrate is bound at residue Trp20. Residues His50, His54, and Asp56 each coordinate Zn(2+). His60 (proton donor/acceptor) is an active-site residue. Positions 161 and 173 each coordinate Zn(2+).

It belongs to the Cyclase 1 superfamily. KynB family. In terms of assembly, homodimer. Zn(2+) serves as cofactor.

It catalyses the reaction N-formyl-L-kynurenine + H2O = L-kynurenine + formate + H(+). Its pathway is amino-acid degradation; L-tryptophan degradation via kynurenine pathway; L-kynurenine from L-tryptophan: step 2/2. Functionally, catalyzes the hydrolysis of N-formyl-L-kynurenine to L-kynurenine, the second step in the kynurenine pathway of tryptophan degradation. This chain is Kynurenine formamidase, found in Pseudomonas aeruginosa (strain ATCC 15692 / DSM 22644 / CIP 104116 / JCM 14847 / LMG 12228 / 1C / PRS 101 / PAO1).